Reading from the N-terminus, the 196-residue chain is MAYSTLFIIALTAVVTQASSTQKSNLTFTLADFVGDWQQTAGYNQDQVLEQGGLSSLFQALGVSVTPIQKVVLSGENGLKADIHVIIPYEGLSGFQMGLIEMIFKVVYPVDDHHFKIILHYGTLVIDGVTPNMIDYFGRPYPGIAVFDGKQITVTGTLWNGNKIYDERLINPDGSLLFRVTINGVTGWRLCENILA.

An N-terminal signal peptide occupies residues 1 to 27 (MAYSTLFIIALTAVVTQASSTQKSNLT).

Heterotetramer of a catalytic 19 kDa and a non-catalytic 35 kDa subunit.

Its subcellular location is the secreted. It carries out the reaction coelenterazine + O2 = coelenteramide + hnu + CO2. With respect to regulation, inhibited by micromolar Cu(2+). In terms of biological role, catalytic subunit of oplophorus-luciferin 2-monooxygenase. Oxidoreductase that converts coelenterazine (the oplophorus luciferin) to coelenteramide under emission of blue light with a maximum at 454 nm. Is also active with bisdeoxycoelenterazine. The protein is Oplophorus-luciferin 2-monooxygenase catalytic subunit of Oplophorus gracilirostris (Luminous shrimp).